Here is a 291-residue protein sequence, read N- to C-terminus: Lipase (291 aa).

Positions 1-17 are cleaved as a signal peptide; the sequence is MRSSLVLFFVSAWTALA. Positions 18–22 are excised as a propeptide; the sequence is SPIRR. 3 cysteine pairs are disulfide-bonded: Cys44/Cys290, Cys58/Cys63, and Cys126/Cys129. Ser168 serves as the catalytic Nucleophile. Catalysis depends on charge relay system residues Asp223 and His280.

The protein belongs to the AB hydrolase superfamily. Lipase family.

It catalyses the reaction a triacylglycerol + H2O = a diacylglycerol + a fatty acid + H(+). This chain is Lipase (LIP), found in Thermomyces lanuginosus (Humicola lanuginosa).